A 663-amino-acid chain; its full sequence is Probable receptor-like protein kinase At1g49730 (663 aa).

Positions 1–25 (MVVNSQAFLLALIALLATQLPSLMA) are cleaved as a signal peptide. The Extracellular segment spans residues 26-254 (ADCPLDFSGS…TNPYHLTMVP (229 aa)). Residues N36, N46, N70, N101, and N171 are each glycosylated (N-linked (GlcNAc...) asparagine). The interval 213-243 (SFSPVASPEPSPSTVGGISPSNSDSQMTTSR) is disordered. Polar residues predominate over residues 224 to 243 (PSTVGGISPSNSDSQMTTSR). The helical transmembrane segment at 255 to 275 (TIGIVVTAVALTMLVVLVILI) threads the bilayer. Residues 276–663 (RRKNRELDES…PHSPINGFSF (388 aa)) lie on the Cytoplasmic side of the membrane. The region spanning 327-609 (NDFNTVIGQG…ESCDPVHSAF (283 aa)) is the Protein kinase domain. ATP is bound by residues 333–341 (IGQGGFGTV) and K355. The active-site Proton acceptor is D451. The disordered stretch occupies residues 631 to 663 (RGDSRIFGPSSSTTSRSHYSRSLPHSPINGFSF). The segment covering 640–652 (SSSTTSRSHYSRS) has biased composition (low complexity).

Belongs to the protein kinase superfamily. Ser/Thr protein kinase family.

Its subcellular location is the cell membrane. The enzyme catalyses L-seryl-[protein] + ATP = O-phospho-L-seryl-[protein] + ADP + H(+). It catalyses the reaction L-threonyl-[protein] + ATP = O-phospho-L-threonyl-[protein] + ADP + H(+). The chain is Probable receptor-like protein kinase At1g49730 from Arabidopsis thaliana (Mouse-ear cress).